We begin with the raw amino-acid sequence, 1194 residues long: MASSQRRGPTTKTPAVVGLTALRNCLVNLPSGLVSVLVSSNTPAQNVVVELSWRVKAPPQAGPLTGPATITRQAFAGWTGMPSKRQPLQPQGAGSFPGSQRSNSLEGCVEIDSAFARNVGLTEGSKVNILLHVDPPTTHTIHIEPLTASDWEIIELHATFLELNLLSQIRAITFAHPLTVYLSPTSTASIKVARIEPEDAASAFGFAKIAPNAEVIVAPKTRQRRMSHQGKSVKAKSLASTRHGKRRDDGSGPSGGGPVFFRAISLPHESFDAAEEQKGAYCVYLDPEVLAIPALRGCAFVGVVVVRPPGLAPPPDANQANNDVGGSTSPDAPEVIKPSLKIVAKLLPWKNAPDLKHIAISNLLADALDIKNVVGCVIRIEAAHQQLPKGSTTKVIIRPYSAGTLSSSAASEQSSLRWSGKDWKSDLAVRRVKEVLSQKTVWGEDILGGPLSDRLVLPAIPDSPLFAGGILLLDGSEVKHGWILGGDRKYILELGSEITTSRPHVPLSISETALPVLPPGRIVGVDKAINTASNILTRSASVLLTGARGSGKTSLVSVITSILKKKHFFHVLPISCAKFADERLQTIKDTFSRAIAEAKWFSPTVIVFDDLDRLIPAEVEHADSTRSRYIAEAFGKAIRDLKSSVLGPGNVVILATVQAKESVNSLIVGGHIFREIITLKAPNKAGRRQVLEQAVGGLSDEKSSPDTSSIRVKNPAALTNGPEPTLKIEKGLELLDIAGMTDGYMPADLQLLVGRARHEAIVRAVESGSDDAEADLVLGKKDFDKAIKGFVPAGLRGVKLQTSGAAWKDIGGLTETRKILLETLEWPTRYAPIFANCPLRLRSGLLLYGYPGCGKTLLASAVAGECGLNFISVKGPEILNKYIGASEKSVRDLFERASAAKPCVLFFDEFDSIAPKRGHDSTGVTDRVVNQMLTQMDGAEGLDGVYVLAATSRPDLIDPALLRPGRLDKSLLCDLPNLEDRVDILRALSLKLKIEESIGLEDIANLTEGYSGADLQAVLYNAHLEAIHDVIASQDEEVERFGNGGKGKGKVDAGSGNDSIDYISFSMGNKDSTGEPSTQPLTNGTQAARTKFAERAAVMAKLDKLKKIVQGDAAKQVQQQQSQTNQAQEEEKGDDEPVINWKHLQSSLKSTRPSIAPDERKRLFRIYNEFIVGRSGEMPSGQSSTEIGGRSSLM.

The interval 220–255 (KTRQRRMSHQGKSVKAKSLASTRHGKRRDDGSGPSG) is disordered. Positions 221–234 (TRQRRMSHQGKSVK) are enriched in basic residues. The tract at residues 538-730 (RSASVLLTGA…GPEPTLKIEK (193 aa)) is AAA-cassette D1. ATP-binding positions include 546 to 553 (GARGSGKT) and 849 to 856 (GYPGCGKT). The AAA-cassette D2 stretch occupies residues 844 to 1028 (GLLLYGYPGC…LYNAHLEAIH (185 aa)). Disordered regions lie at residues 1062-1084 (YISFSMGNKDSTGEPSTQPLTNG), 1116-1139 (QVQQQQSQTNQAQEEEKGDDEPVI), and 1174-1194 (RSGEMPSGQSSTEIGGRSSLM). Residues 1066 to 1084 (SMGNKDSTGEPSTQPLTNG) are compositionally biased toward polar residues. The segment covering 1116–1127 (QVQQQQSQTNQA) has biased composition (low complexity).

This sequence belongs to the AAA ATPase family. In terms of assembly, interacts with PEX6; forming the PEX1-PEX6 AAA ATPase complex, which is composed of a heterohexamer formed by a trimer of PEX1-PEX6 dimers.

It localises to the cytoplasm. Its subcellular location is the cytosol. The protein localises to the peroxisome membrane. It carries out the reaction ATP + H2O = ADP + phosphate + H(+). Functionally, component of the PEX1-PEX6 AAA ATPase complex, a protein dislocase complex that mediates the ATP-dependent extraction of the PEX5 receptor from peroxisomal membranes, an essential step for PEX5 recycling. Specifically recognizes PEX5 monoubiquitinated at 'Cys-6', and pulls it out of the peroxisome lumen through the PEX2-PEX10-PEX12 retrotranslocation channel. Extraction by the PEX1-PEX6 AAA ATPase complex is accompanied by unfolding of the TPR repeats and release of bound cargo from PEX5. Regulates autophagy and biogenesis of peroxisomes and Woronin bodies. Plays important roles in mycelial growth and development and stress response. Is also essential for conidiation and fatty acid utilization. Required for nematode predation via trap formation. In Arthrobotrys oligospora (strain ATCC 24927 / CBS 115.81 / DSM 1491) (Nematode-trapping fungus), this protein is Peroxisomal ATPase PEX1.